The sequence spans 570 residues: Protein NRT1/ PTR FAMILY 8.2 (570 aa).

Threonine 99 carries the post-translational modification Phosphothreonine. 10 helical membrane passes run 100-120, 136-156, 182-202, 210-230, 335-355, 370-390, 414-434, 454-474, 493-513, and 537-557; these read IASFVVIYIAGMTLLTISASV, AGQTAITFIALYLIALGTGGI, FFNWFYFVINVGAMIASSVLV, WGWGLGVPTVAMAIAVVFFFA, IWATGIVFASVYSQMGTVFVL, IPSASLSLFDTLSVLFWAPVY, IGIGLVISIFSMVSAGILEVA, IFWQVPQYFLVGCAEVFTFIG, ALSLTAIAFGNYLSTFLVTLV, and YFFWLLAGLSFLNFLVYLWIA.

Belongs to the major facilitator superfamily. Proton-dependent oligopeptide transporter (POT/PTR) (TC 2.A.17) family. As to expression, expressed in developing and germinating pollen grains and ovules.

Its subcellular location is the cell membrane. Peptide transporter. Mediates the transport of di- and tripeptides. High affinity transporter. Involved in the uptake of peptides during pollen germination and tube growth. In Arabidopsis thaliana (Mouse-ear cress), this protein is Protein NRT1/ PTR FAMILY 8.2 (NPF8.2).